The sequence spans 114 residues: Large ribosomal subunit protein uL22 (114 aa).

It belongs to the universal ribosomal protein uL22 family. Part of the 50S ribosomal subunit.

In terms of biological role, this protein binds specifically to 23S rRNA; its binding is stimulated by other ribosomal proteins, e.g. L4, L17, and L20. It is important during the early stages of 50S assembly. It makes multiple contacts with different domains of the 23S rRNA in the assembled 50S subunit and ribosome. Functionally, the globular domain of the protein is located near the polypeptide exit tunnel on the outside of the subunit, while an extended beta-hairpin is found that lines the wall of the exit tunnel in the center of the 70S ribosome. The chain is Large ribosomal subunit protein uL22 from Streptococcus gordonii (strain Challis / ATCC 35105 / BCRC 15272 / CH1 / DL1 / V288).